The primary structure comprises 327 residues: Annexin A8 (327 aa).

Annexin repeat units lie at residues 21–92 (FNPV…ALMY), 93–164 (PPYR…CLLQ), 177–249 (GLAL…TIVK), and 253–324 (NLHC…SLVG). Residues Met-266, Gly-268, Gly-270, and Asp-310 each contribute to the Ca(2+) site.

This sequence belongs to the annexin family.

Its function is as follows. This protein is an anticoagulant protein that acts as an indirect inhibitor of the thromboplastin-specific complex, which is involved in the blood coagulation cascade. In Oryctolagus cuniculus (Rabbit), this protein is Annexin A8 (ANXA8).